Consider the following 227-residue polypeptide: ATP-dependent dethiobiotin synthetase BioD (227 aa).

12-17 provides a ligand contact to ATP; it reads DAGKTH. Thr16 lines the Mg(2+) pocket. Lys37 is an active-site residue. Ser41 is a binding site for substrate. ATP-binding positions include Asp54, 116 to 119, 176 to 177, and 205 to 207; these read EGAG, NQ, and PYS. Mg(2+) is bound by residues Asp54 and Glu116.

The protein belongs to the dethiobiotin synthetase family. In terms of assembly, homodimer. The cofactor is Mg(2+).

The protein resides in the cytoplasm. The catalysed reaction is (7R,8S)-7,8-diammoniononanoate + CO2 + ATP = (4R,5S)-dethiobiotin + ADP + phosphate + 3 H(+). It participates in cofactor biosynthesis; biotin biosynthesis; biotin from 7,8-diaminononanoate: step 1/2. Functionally, catalyzes a mechanistically unusual reaction, the ATP-dependent insertion of CO2 between the N7 and N8 nitrogen atoms of 7,8-diaminopelargonic acid (DAPA, also called 7,8-diammoniononanoate) to form a ureido ring. In Pseudoalteromonas translucida (strain TAC 125), this protein is ATP-dependent dethiobiotin synthetase BioD.